The following is an 806-amino-acid chain: SH3-containing GRB2-like protein 3-interacting protein 1 (806 aa).

2 disordered regions span residues 1–115 (MMEG…ESHK) and 142–278 (SIGN…QAAT). 2 stretches are compositionally biased toward basic and acidic residues: residues 16–32 (RKKE…DRDG) and 40–54 (PPYH…EGGK). S78, S104, S105, S107, S149, S151, S156, and S169 each carry phosphoserine. Phosphothreonine is present on residues T180 and T182. Residues S236 and F243 each carry the phosphoserine modification. The span at 245-260 (TGTPPPLPPKTVPATP) shows a compositional bias: pro residues. Phosphothreonine occurs at positions 247 and 259. Phosphoserine is present on residues S265, D274, S287, S289, S300, S316, and S319. Polar residues predominate over residues 265-276 (SPLTVATGNDQA). Residues 315–324 (FSDASPEHVT) show a composition bias toward basic and acidic residues. Residues 315 to 533 (FSDASPEHVT…SRGPSPLTMG (219 aa)) form a disordered region. Phosphothreonine occurs at positions 324, 328, and 335. The span at 335–345 (TPPAASDIPAD) shows a compositional bias: low complexity. A338 carries the post-translational modification Phosphoserine. Residues 346–369 (SPAPAPPGPTGSAGPPGPPGPRHV) show a composition bias toward pro residues. S371 carries the phosphoserine modification. Residues 377–392 (EVQKKVAEQTFIKDDY) are compositionally biased toward basic and acidic residues. At S398 the chain carries Phosphoserine. Phosphothreonine is present on T409. A compositionally biased stretch (low complexity) spans 436–453 (TSGASSPARPATPLVPCS). Over residues 454–473 (TTPPPPPPRPPSRPKLPPGK) the composition is skewed to pro residues. 2 stretches are compositionally biased toward low complexity: residues 480–490 (SRPFSPPIHSS) and 497–520 (PLAR…TTPT). Residues S484, S505, and G533 each carry the phosphoserine modification. Residues 537 to 805 (TLPVAAAFTE…RFAAGKYLAD (269 aa)) enclose the MHD domain. Interaction with DPF motifs-containing proteins regions lie at residues 539-545 (PVAAAFT), 571-573 (SFP), 645-648 (TYYN), and 791-796 (SLIKKR). The segment at 627–806 (MPNLMTHLKK…FAAGKYLADN (180 aa)) is necessary and sufficient to mediate interaction with CANX.

Interacts with proteins essential or regulating the formation of functional clathrin-coated pits. Interacts with CANX. Interacts with AP2A1. Interacts with EPS15. Interacts with SH3GL3. Interacts with AMPH. Interacts with ITSN1 (via SH3 domains). Interacts with and REPS1. In terms of tissue distribution, detected in brain, spinal cord and cerebellum.

It localises to the membrane. Its subcellular location is the clathrin-coated pit. Its function is as follows. May function in clathrin-mediated endocytosis. Has both a membrane binding/tubulating activity and the ability to recruit proteins essential to the formation of functional clathrin-coated pits. Has a preference for membranes enriched in phosphatidylserine and phosphoinositides and is required for the endocytosis of the transferrin receptor. May also bind tubulin. May play a role in the regulation of energy homeostasis. This is SH3-containing GRB2-like protein 3-interacting protein 1 (Sgip1) from Mus musculus (Mouse).